Consider the following 522-residue polypeptide: GMP synthase [glutamine-hydrolyzing] (522 aa).

One can recognise a Glutamine amidotransferase type-1 domain in the interval 9–204; that stretch reads KILILDFGAQ…VVDICGCQML (196 aa). Cysteine 86 acts as the Nucleophile in catalysis. Catalysis depends on residues histidine 178 and glutamate 180. The GMPS ATP-PPase domain maps to 205 to 397; sequence WTAANIIEDQ…LGLPHAMVYR (193 aa). ATP is bound at residue 232–238; the sequence is SGGVDSS.

In terms of assembly, homodimer.

It carries out the reaction XMP + L-glutamine + ATP + H2O = GMP + L-glutamate + AMP + diphosphate + 2 H(+). The protein operates within purine metabolism; GMP biosynthesis; GMP from XMP (L-Gln route): step 1/1. In terms of biological role, catalyzes the synthesis of GMP from XMP. This is GMP synthase [glutamine-hydrolyzing] (guaA) from Xylella fastidiosa (strain 9a5c).